A 317-amino-acid polypeptide reads, in one-letter code: Apolipoprotein E (317 aa).

Positions 1 to 18 (MKVLWAALLVTFLAGCQA) are cleaved as a signal peptide. 8 repeat units span residues 80–101 (ALMDETMKELKAYKSELEEQLT), 102–123 (PVAEETRARLSKELQAAQARLG), 124–145 (ADMEDVRGRLVQYRGEVQAMLG), 146–167 (QSTEELRARLASHLRKLRKRLL), 168–189 (RDADDLQKRLAVYQAGAREGAE), 190–211 (RGVSAIRERLGPLVEQGRVRAA), 212–233 (TVGSVAGKPLQERAQAWGERLR), and 234–255 (ARMEEMGSRTRDRLDEVKEQVA). Residues 80–255 (ALMDETMKEL…RLDEVKEQVA (176 aa)) are 8 X 22 AA approximate tandem repeats. Position 143 is a methionine sulfoxide (Met-143). Position 147 is a phosphoserine (Ser-147). Residues 158–168 (HLRKLRKRLLR) form an LDL and other lipoprotein receptors binding region. 162–165 (LRKR) contacts heparin. The tract at residues 210 to 290 (AATVGSVAGK…SWFEPLVEDM (81 aa)) is lipid-binding and lipoprotein association. Residue 229-236 (GERLRARM) participates in heparin binding. Residues 266–317 (QQIRLQAEAFQARLKSWFEPLVEDMQRQWAGLVEKVQAAVGTSAAPVPSDNH) are homooligomerization. A specificity for association with VLDL region spans residues 278–290 (RLKSWFEPLVEDM).

Belongs to the apolipoprotein A1/A4/E family. Homotetramer. May interact with ABCA1; functionally associated with ABCA1 in the biogenesis of HDLs. May interact with APP/A4 amyloid-beta peptide; the interaction is extremely stable in vitro but its physiological significance is unclear. May interact with MAPT. May interact with MAP2. In the cerebrospinal fluid, interacts with secreted SORL1. Interacts with PMEL; this allows the loading of PMEL luminal fragment on ILVs to induce fibril nucleation. APOE exists as multiple glycosylated and sialylated glycoforms within cells and in plasma. The extent of glycosylation and sialylation are tissue and context specific. Post-translationally, glycated in plasma VLDL. In terms of processing, phosphorylated by FAM20C in the extracellular medium.

The protein localises to the secreted. It is found in the extracellular space. It localises to the extracellular matrix. The protein resides in the extracellular vesicle. Its subcellular location is the endosome. The protein localises to the multivesicular body. Its function is as follows. APOE is an apolipoprotein, a protein associating with lipid particles, that mainly functions in lipoprotein-mediated lipid transport between organs via the plasma and interstitial fluids. APOE is a core component of plasma lipoproteins and is involved in their production, conversion and clearance. Apolipoproteins are amphipathic molecules that interact both with lipids of the lipoprotein particle core and the aqueous environment of the plasma. As such, APOE associates with chylomicrons, chylomicron remnants, very low density lipoproteins (VLDL) and intermediate density lipoproteins (IDL) but shows a preferential binding to high-density lipoproteins (HDL). It also binds a wide range of cellular receptors including the LDL receptor/LDLR, the LDL receptor-related proteins LRP1, LRP2 and LRP8 and the very low-density lipoprotein receptor/VLDLR that mediate the cellular uptake of the APOE-containing lipoprotein particles. Finally, APOE also has a heparin-binding activity and binds heparan-sulfate proteoglycans on the surface of cells, a property that supports the capture and the receptor-mediated uptake of APOE-containing lipoproteins by cells. A main function of APOE is to mediate lipoprotein clearance through the uptake of chylomicrons, VLDLs, and HDLs by hepatocytes. APOE is also involved in the biosynthesis by the liver of VLDLs as well as their uptake by peripheral tissues ensuring the delivery of triglycerides and energy storage in muscle, heart and adipose tissues. By participating in the lipoprotein-mediated distribution of lipids among tissues, APOE plays a critical role in plasma and tissues lipid homeostasis. APOE is also involved in two steps of reverse cholesterol transport, the HDLs-mediated transport of cholesterol from peripheral tissues to the liver, and thereby plays an important role in cholesterol homeostasis. First, it is functionally associated with ABCA1 in the biogenesis of HDLs in tissues. Second, it is enriched in circulating HDLs and mediates their uptake by hepatocytes. APOE also plays an important role in lipid transport in the central nervous system, regulating neuron survival and sprouting. The polypeptide is Apolipoprotein E (APOE) (Pongo pygmaeus (Bornean orangutan)).